Here is an 800-residue protein sequence, read N- to C-terminus: Protein gfi-3 (800 aa).

A coiled-coil region spans residues 346-366 (ESLQQAQLRNDEICHQMANIE). TPR repeat units lie at residues 526–559 (AIGA…YPEE) and 637–670 (IRIH…AENT).

As to quaternary structure, the APC/C complex is probably composed of at least 12 subunits: apc-2, apc-10, apc-11, cdc-26, emb-1, emb-27, emb-30, mat-1, mat-2, mat-3, such-1 and gfi-3. As to expression, expressed in gut cells and mature sperm stored in the spermatheca.

It functions in the pathway protein modification; protein ubiquitination. Functionally, probable component of the anaphase promoting complex/cyclosome (APC/C), a cell cycle-regulated E3 ubiquitin ligase that controls progression through mitosis and the G1 phase of the cell cycle. The APC/C complex acts by mediating ubiquitination and subsequent degradation of target proteins. Required for the metaphase to anaphase transition in meiosis. The protein is Protein gfi-3 of Caenorhabditis elegans.